We begin with the raw amino-acid sequence, 386 residues long: MKKEMLAMILAGGQGSRLGVFTKRIAKPAVSFGGKYRIIDFVLSNCSNSGIDTVGVLTQYRPLILNSHIGMGSHWDLDRINGGVYVLQPFMNEKEGNWYNGTAHAIYQNMDFVDTYNPEYVLILSGDHIYKMDYSKMLKFHKEKGSKATIAVIEVPWDEASRFGIMNTNEDSSIYEFEEKPSEPKSNLASMGVYIFDWKMLRNYFKEAEKNPEINYDDFGKNLIPKMLEDNVGMYAYPFKGYWRDVGTIQSLWDANMDIIKSPETLDLADPKWKIYTNTMAMPPQYIGKNANVHRSMIADGCRILGEVGNSVLSHGVVVGKGSKVIDSVIMPNVVIGENVTIEKAMIGECATINDNVQIKNVNNEINVVSEYENIEPRCVLIEGGL.

Alpha-D-glucose 1-phosphate-binding positions include tyrosine 99, glycine 164, 179-180 (EK), and serine 190.

The protein belongs to the bacterial/plant glucose-1-phosphate adenylyltransferase family. In terms of assembly, homotetramer.

It catalyses the reaction alpha-D-glucose 1-phosphate + ATP + H(+) = ADP-alpha-D-glucose + diphosphate. It participates in glycan biosynthesis; glycogen biosynthesis. Functionally, involved in the biosynthesis of ADP-glucose, a building block required for the elongation reactions to produce glycogen. Catalyzes the reaction between ATP and alpha-D-glucose 1-phosphate (G1P) to produce pyrophosphate and ADP-Glc. The chain is Glucose-1-phosphate adenylyltransferase from Clostridioides difficile (strain 630) (Peptoclostridium difficile).